The primary structure comprises 111 residues: MLLLFCICCVFIKLVLAEVNLTFVDYAKLPPNYAELLANLIDQHGLMLFDTADVRIEAYNYLLNSITETNTDTDAYLCQLLTGQYTTDCYIFGDSVYEGPENINPSTRYID.

The first 17 residues, 1–17 (MLLLFCICCVFIKLVLA), serve as a signal peptide directing secretion. The N-linked (GlcNAc...) asparagine glycan is linked to N20.

This sequence belongs to the UPF0321 family.

The polypeptide is UPF0321 protein P20C8.02c (Schizosaccharomyces pombe (strain 972 / ATCC 24843) (Fission yeast)).